Reading from the N-terminus, the 260-residue chain is Putative ABC transporter ATP-binding protein PYRAB01300 (260 aa).

Residues 2–234 (IEFKDVWFWY…DLRNFSLVEP (233 aa)) form the ABC transporter domain. 34-41 (GPNGSGKT) serves as a coordination point for ATP.

It belongs to the ABC transporter superfamily.

It localises to the cell membrane. Probably part of an ABC transporter complex. Responsible for energy coupling to the transport system. This is Putative ABC transporter ATP-binding protein PYRAB01300 from Pyrococcus abyssi (strain GE5 / Orsay).